Reading from the N-terminus, the 387-residue chain is MKKVSVLGSTGSVGKKTVDLLSKRKEEYQVEALSAHSNFALLAHQAKLLNAKYVAISDERLYKDLKESLLGTDVKIAIGATNVAAIPVDLSVVAIVGIAGLGPVMEVIESGTKVIALANKESIVCGGKLLLKKAKEKNVQIIPIDSEHNAIFQILQNDDKCVEKIILTASGGPFLNYSLEQLRNIMVDQALSHPTWNMGKKISVDSATMMNKALEIIEAHNLFNISPDKIEAVVHPESIVHGIVTYKDGFNFAVLAETDMAIPISYALSWPERLVLNYKLDLTKQGKLTFQEPDHKHFPVLKLSMEVLNSSTPQTNSIVLNAANEIAVNEFLKSRIGFLEIVEVVESTMESFGSYTDINSLSDIINIDCESRIIAHKIVESKVVAYS.

6 residues coordinate NADPH: Thr-10, Gly-11, Ser-12, Val-13, Asn-38, and Asn-119. Lys-120 is a 1-deoxy-D-xylulose 5-phosphate binding site. Glu-121 is an NADPH binding site. Residue Asp-145 coordinates Mn(2+). 1-deoxy-D-xylulose 5-phosphate-binding residues include Ser-146, Glu-147, Ser-170, and His-193. Glu-147 contributes to the Mn(2+) binding site. Residue Gly-199 participates in NADPH binding. 4 residues coordinate 1-deoxy-D-xylulose 5-phosphate: Ser-206, Asn-211, Lys-212, and Glu-215. Position 215 (Glu-215) interacts with Mn(2+).

It belongs to the DXR family. The cofactor is Mg(2+). It depends on Mn(2+) as a cofactor.

The catalysed reaction is 2-C-methyl-D-erythritol 4-phosphate + NADP(+) = 1-deoxy-D-xylulose 5-phosphate + NADPH + H(+). It functions in the pathway isoprenoid biosynthesis; isopentenyl diphosphate biosynthesis via DXP pathway; isopentenyl diphosphate from 1-deoxy-D-xylulose 5-phosphate: step 1/6. In terms of biological role, catalyzes the NADPH-dependent rearrangement and reduction of 1-deoxy-D-xylulose-5-phosphate (DXP) to 2-C-methyl-D-erythritol 4-phosphate (MEP). The sequence is that of 1-deoxy-D-xylulose 5-phosphate reductoisomerase from Wolbachia sp. subsp. Drosophila simulans (strain wRi).